A 303-amino-acid polypeptide reads, in one-letter code: Archaeosortase A (303 aa).

7 consecutive transmembrane segments (helical) span residues 3-23 (GLLS…GAVA), 36-56 (TAAW…FTLV), 60-80 (YIEG…GWLL), 93-113 (AVAA…FTLL), 169-189 (VVLA…IAAV), 200-220 (LAIA…FIAI), and 259-279 (LAVV…PELL). The active-site Acyl-thioester intermediate is Cys-173. Arg-214 serves as the catalytic Proton donor.

Belongs to the exosortase/archaeosortase family. Archaeosortase A subfamily.

Its subcellular location is the cell membrane. Transpeptidase that recognizes and modifies its substrate by proteolytic cleavage of a sorting signal. Following cleavage, a covalent intermediate is formed via a thioester bond between the archaeosortase and its substrate, which is then transferred and covalently attached to the cell membrane. This sortase recognizes a tripartite structure consisting of a conserved Pro-Gly-Phe (PGF) motif, followed by a transmembrane alpha helix domain and a cluster of basic residues, usually at the C-terminus of target proteins. Confirmed substrates include the cell surface S-layer glycoprotein Csg and HVO_0405. ArtA is required for the C-terminal processing of Csg and for its lipidation and attachment to the archaeal plasma membrane. It is also required for the processing of HVO_0405, which contains an atypical central tripartite structure. The polypeptide is Archaeosortase A (Haloferax volcanii (strain ATCC 29605 / DSM 3757 / JCM 8879 / NBRC 14742 / NCIMB 2012 / VKM B-1768 / DS2) (Halobacterium volcanii)).